A 121-amino-acid chain; its full sequence is Small ribosomal subunit protein bS6 (121 aa).

This sequence belongs to the bacterial ribosomal protein bS6 family.

Functionally, binds together with bS18 to 16S ribosomal RNA. The protein is Small ribosomal subunit protein bS6 of Rickettsia canadensis (strain McKiel).